Consider the following 311-residue polypeptide: Malate dehydrogenase (311 aa).

NAD(+) is bound by residues 10 to 15 and Asp35; that span reads GAGRVG. Residues Arg84 and Arg90 each contribute to the substrate site. NAD(+)-binding positions include Asn97 and 120-122; that span reads VTN. Substrate is bound by residues Asn122 and Arg153. His177 (proton acceptor) is an active-site residue.

Belongs to the LDH/MDH superfamily. MDH type 3 family.

The enzyme catalyses (S)-malate + NAD(+) = oxaloacetate + NADH + H(+). Catalyzes the reversible oxidation of malate to oxaloacetate. The protein is Malate dehydrogenase of Nitrosococcus oceani (strain ATCC 19707 / BCRC 17464 / JCM 30415 / NCIMB 11848 / C-107).